Reading from the N-terminus, the 212-residue chain is Chloramphenicol acetyltransferase (212 aa).

His186 (proton acceptor) is an active-site residue.

Belongs to the chloramphenicol acetyltransferase family. In terms of assembly, homotrimer.

The enzyme catalyses chloramphenicol + acetyl-CoA = chloramphenicol 3-acetate + CoA. In terms of biological role, this enzyme is an effector of chloramphenicol resistance in bacteria. This Clostridioides difficile (Peptoclostridium difficile) protein is Chloramphenicol acetyltransferase (catD).